A 537-amino-acid polypeptide reads, in one-letter code: uncharacterized protein (537 aa).

This sequence belongs to the RuBisCO large chain family. Type IV subfamily.

Unknown. Probably does not have RuBisCO activity. This is an uncharacterized protein from Symbiodinium sp. (Dinoflagellate).